The primary structure comprises 266 residues: Aquaporin TIP3-2 (266 aa).

Helical transmembrane passes span 29–49 (AAISEFIATAIFVFAAEGSVL) and 66–86 (GLVAVALAHALGLAVAVAVAV). The NPA 1 signature appears at 94–96 (NPA). 3 consecutive transmembrane segments (helical) span residues 109–129 (LVRAVLYWAAQLLGAVAATLL), 153–173 (AVLLEAVMTFGFVYAYYATVV), and 180–200 (LGTIAPLAVGFLLGANVLAGG). Residues 208–210 (NPA) carry the NPA 2 motif. Residues 228–248 (YWLGPFLGAGLAGLVYEYLLI) traverse the membrane as a helical segment.

The protein belongs to the MIP/aquaporin (TC 1.A.8) family. TIP (TC 1.A.8.10) subfamily.

Its subcellular location is the vacuole membrane. Its function is as follows. Aquaporins facilitate the transport of water and small neutral solutes across cell membranes. This chain is Aquaporin TIP3-2 (TIP3-2), found in Zea mays (Maize).